The primary structure comprises 148 residues: 3-dehydroquinate dehydratase (148 aa).

Tyr-23 serves as the catalytic Proton acceptor. Asn-75, His-81, and Asp-88 together coordinate substrate. His-101 serves as the catalytic Proton donor. Residues 102–103 (LS) and Arg-112 each bind substrate.

Belongs to the type-II 3-dehydroquinase family. In terms of assembly, homododecamer.

It catalyses the reaction 3-dehydroquinate = 3-dehydroshikimate + H2O. The protein operates within metabolic intermediate biosynthesis; chorismate biosynthesis; chorismate from D-erythrose 4-phosphate and phosphoenolpyruvate: step 3/7. Its function is as follows. Catalyzes a trans-dehydration via an enolate intermediate. This is 3-dehydroquinate dehydratase from Halorhodospira halophila (strain DSM 244 / SL1) (Ectothiorhodospira halophila (strain DSM 244 / SL1)).